A 569-amino-acid polypeptide reads, in one-letter code: Urease subunit alpha (569 aa).

The 439-residue stretch at 131 to 569 (GGIDAHIHFI…VPMAQRYFLF (439 aa)) folds into the Urease domain. Ni(2+)-binding residues include histidine 136, histidine 138, and lysine 219. Lysine 219 carries the N6-carboxylysine modification. A substrate-binding site is contributed by histidine 221. 2 residues coordinate Ni(2+): histidine 248 and histidine 274. Histidine 322 serves as the catalytic Proton donor. Residue aspartate 362 participates in Ni(2+) binding.

The protein belongs to the metallo-dependent hydrolases superfamily. Urease alpha subunit family. Heterotrimer of UreA (gamma), UreB (beta) and UreC (alpha) subunits. Three heterotrimers associate to form the active enzyme. The cofactor is Ni cation. In terms of processing, carboxylation allows a single lysine to coordinate two nickel ions.

The protein resides in the cytoplasm. It carries out the reaction urea + 2 H2O + H(+) = hydrogencarbonate + 2 NH4(+). It participates in nitrogen metabolism; urea degradation; CO(2) and NH(3) from urea (urease route): step 1/1. The chain is Urease subunit alpha from Bacillus sp. (strain TB-90).